Here is a 224-residue protein sequence, read N- to C-terminus: uncharacterized protein (224 aa).

Positions M1–A16 are cleaved as a signal peptide.

This is an uncharacterized protein from Escherichia coli.